The following is a 245-amino-acid chain: 1-(5-phosphoribosyl)-5-[(5-phosphoribosylamino)methylideneamino] imidazole-4-carboxamide isomerase (245 aa).

Catalysis depends on Asp7, which acts as the Proton acceptor. Catalysis depends on Asp129, which acts as the Proton donor.

This sequence belongs to the HisA/HisF family.

It is found in the cytoplasm. It catalyses the reaction 1-(5-phospho-beta-D-ribosyl)-5-[(5-phospho-beta-D-ribosylamino)methylideneamino]imidazole-4-carboxamide = 5-[(5-phospho-1-deoxy-D-ribulos-1-ylimino)methylamino]-1-(5-phospho-beta-D-ribosyl)imidazole-4-carboxamide. It participates in amino-acid biosynthesis; L-histidine biosynthesis; L-histidine from 5-phospho-alpha-D-ribose 1-diphosphate: step 4/9. The chain is 1-(5-phosphoribosyl)-5-[(5-phosphoribosylamino)methylideneamino] imidazole-4-carboxamide isomerase from Shewanella piezotolerans (strain WP3 / JCM 13877).